We begin with the raw amino-acid sequence, 665 residues long: GRB2-associated-binding protein 2 (665 aa).

A Phosphoserine modification is found at Ser2. The PH domain occupies Asp8 to Gly119. The tract at residues Arg131–Thr184 is disordered. 10 positions are modified to phosphoserine: Ser135, Ser142, Ser143, Ser149, Ser150, Ser160, Ser165, Ser211, Ser220, and Ser261. Residues Ser160–Leu170 show a composition bias toward polar residues. At Thr262 the chain carries Phosphothreonine. Tyr263 bears the Phosphotyrosine mark. Thr275 carries the phosphothreonine modification. Ser278 and Ser282 each carry phosphoserine. Position 284 is a phosphothreonine (Thr284). Phosphotyrosine is present on Tyr290. Thr328 carries the post-translational modification Phosphothreonine. The tract at residues Val338–Arg396 is disordered. The SH3-binding signature appears at Pro348–Pro355. The segment covering Gln357–Val379 has biased composition (polar residues). Ser365 bears the Phosphoserine mark. Residues Thr382 and Thr388 each carry the phosphothreonine modification. The residue at position 402 (Ser402) is a Phosphoserine. The residue at position 405 (Thr405) is a Phosphothreonine. Residues Tyr408 to Asn445 form a disordered region. The residue at position 420 (Ser420) is a Phosphoserine. The segment covering Gly430–Asp439 has biased composition (polar residues). At Tyr441 the chain carries Phosphotyrosine. Residue Ser469 is modified to Phosphoserine. The tract at residues Pro491–Leu517 is disordered. Residues Pro499–Pro508 carry the SH3-binding motif. Position 532 is a phosphoserine (Ser532). 2 stretches are compositionally biased toward polar residues: residues Ser548–Ser566 and Asn578–Ser600. 2 disordered regions span residues Ser548 to Tyr632 and Thr646 to Leu665. Ser612 carries the phosphoserine modification. Position 632 is a phosphotyrosine (Tyr632). The span at Thr646–Pro659 shows a compositional bias: polar residues.

It belongs to the GAB family. In terms of assembly, part of a complex composed of EEIG1, TNFRSF11A/RANK, PLCG2, GAB2, TEC and BTK; complex formation increases in the presence of TNFSF11/RANKL. Interacts with HCK. Interacts with SHC1; may mediate interaction with receptors. Interacts with SYK. Interacts with PI-3 kinase. Interacts with GRB2 (via SH3 2 domain). Interacts (phosphorylated) with PTPN11. Interacts with TNFRSF11A (via cytoplasmic domain). Interacts (phosphorylated) with 14-3-3 family proteins SFN, YWHAB, YWHAE, YWHAG, YWHAH, YWHAQ and YWHAZ; prevents interaction with GRB2 and attenuates GAB2 signaling. Post-translationally, phosphorylated upon EGF stimulation. Phosphorylated on tyrosine residues by HCK upon IL6 signaling. Phosphorylated on tyrosine residue(s) by the thrombopoietin receptor (TPOR), stem cell factor receptor (SCFR), and T-cell and B-cell antigen receptors, gp130, IL-2R and IL-3R. Phosphorylated upon stimulation of TNFRSF11A/RANK by TNFSF11/RANKL. Dephosphorylated by PTPN11. As to expression, ubiquitously expressed.

The protein resides in the cytoplasm. The protein localises to the cell membrane. It is found in the membrane raft. In terms of biological role, adapter protein which acts downstream of several membrane receptors including cytokine, antigen, hormone, cell matrix and growth factor receptors to regulate multiple signaling pathways. Regulates osteoclast differentiation mediating the TNFRSF11A/RANK signaling. In allergic response, it plays a role in mast cells activation and degranulation through PI-3-kinase regulation. Also involved in the regulation of cell proliferation and hematopoiesis. The chain is GRB2-associated-binding protein 2 (Gab2) from Mus musculus (Mouse).